A 245-amino-acid polypeptide reads, in one-letter code: 1-(5-phosphoribosyl)-5-[(5-phosphoribosylamino)methylideneamino] imidazole-4-carboxamide isomerase (245 aa).

The Proton acceptor role is filled by aspartate 8. Aspartate 129 serves as the catalytic Proton donor.

Belongs to the HisA/HisF family.

It is found in the cytoplasm. It catalyses the reaction 1-(5-phospho-beta-D-ribosyl)-5-[(5-phospho-beta-D-ribosylamino)methylideneamino]imidazole-4-carboxamide = 5-[(5-phospho-1-deoxy-D-ribulos-1-ylimino)methylamino]-1-(5-phospho-beta-D-ribosyl)imidazole-4-carboxamide. The protein operates within amino-acid biosynthesis; L-histidine biosynthesis; L-histidine from 5-phospho-alpha-D-ribose 1-diphosphate: step 4/9. The sequence is that of 1-(5-phosphoribosyl)-5-[(5-phosphoribosylamino)methylideneamino] imidazole-4-carboxamide isomerase from Pelobacter propionicus (strain DSM 2379 / NBRC 103807 / OttBd1).